Reading from the N-terminus, the 637-residue chain is Sodium-dependent phosphate transport protein 2A (637 aa).

Residues 1-103 are Cytoplasmic-facing; that stretch reads MMSYSERLGG…LAQVGTKLLK (103 aa). Phosphoserine occurs at positions 14 and 34. Residues 104 to 125 traverse the membrane as a helical segment; that stretch reads VPLMLAFLYLFVCSLDVLSSAF. The Extracellular segment spans residues 126 to 145; sequence QLAGGKVAGDIFKDNAILSN. The helical transmembrane segment at 146 to 163 threads the bilayer; it reads PVAGLVVGILVTVLVQSS. Residues 164 to 165 lie on the Cytoplasmic side of the membrane; the sequence is ST. Residues 166–185 form a helical membrane-spanning segment; the sequence is STSIIVSMVSSGLLEVSSAI. Over 186–345 the chain is Extracellular; it reads PIIMGSNIGT…HIFVDTGLPD (160 aa). 2 disulfides stabilise this stretch: cysteine 225-cysteine 520 and cysteine 306-cysteine 334. N-linked (GlcNAc...) asparagine glycosylation is found at asparagine 298 and asparagine 328. Residues 346–368 form a helical membrane-spanning segment; that stretch reads LAVGLILLAGSLVVLCTCLILLV. Topologically, residues 369–410 are cytoplasmic; the sequence is KMLNSLLKGQVMSSRRSSTQTDFPAPFTWVTGYFAMVVGASM. A helical membrane pass occupies residues 411–434; it reads TFVVQSSSVFTSAITPLIGLGVIS. Topologically, residues 435–464 are extracellular; the sequence is IERAYPLTLGSNIGTTTTAILAALASPREK. Residues 465-485 traverse the membrane as a helical segment; the sequence is LSSSFQIALCHFFFNISGILL. The Cytoplasmic segment spans residues 486–511; that stretch reads WYPLPCTRLPIRMAKALGKRTAKYRW. Threonine 506 carries the post-translational modification Phosphothreonine; by PKC. A helical transmembrane segment spans residues 512-532; the sequence is FAVLYLLVCFLLLPSLVFGIS. The Extracellular portion of the chain corresponds to 533–537; the sequence is MAGWQ. A helical transmembrane segment spans residues 538 to 559; that stretch reads AMVGVGTPFGALLAFVVLVNVL. Residues 560–637 lie on the Cytoplasmic side of the membrane; the sequence is QSRSPGHLPK…LPAHHNATRL (78 aa). Serine 605 is subject to Phosphoserine. Threonine 621 is modified (phosphothreonine). Position 623 is a phosphoserine (serine 623).

It belongs to the SLC34A transporter family. In terms of assembly, interacts via its C-terminal region with NHERF4. Interacts with NHERF1. Interacts with TMEM174; regulates SLC34A1 internalization by PTH and FGF23. In terms of tissue distribution, kidney.

It localises to the apical cell membrane. Its subcellular location is the cell membrane. The catalysed reaction is 3 Na(+)(out) + phosphate(out) = 3 Na(+)(in) + phosphate(in). In terms of biological role, involved in actively transporting phosphate into cells via Na(+) cotransport in the renal brush border membrane. The cotransport has a Na(+):Pi stoichiometry of 3:1 and is electrogenic. The protein is Sodium-dependent phosphate transport protein 2A of Mus musculus (Mouse).